Consider the following 604-residue polypeptide: Probable translation initiation factor IF-2 (604 aa).

The tr-type G domain maps to 18-232; sequence IRTPIVCVLG…VLIGLAQRYM (215 aa). Residues 27 to 34 form a G1 region; that stretch reads GHVDHGKT. 27–34 contacts GTP; that stretch reads GHVDHGKT. The G2 stretch occupies residues 52–56; the sequence is AITQH. The tract at residues 88 to 91 is G3; that stretch reads DTPG. Residues 88-92 and 142-145 contribute to the GTP site; these read DTPGH and TKLD. A G4 region spans residues 142 to 145; sequence TKLD. Residues 210 to 212 form a G5 region; it reads SAH.

This sequence belongs to the TRAFAC class translation factor GTPase superfamily. Classic translation factor GTPase family. IF-2 subfamily.

Its function is as follows. Function in general translation initiation by promoting the binding of the formylmethionine-tRNA to ribosomes. Seems to function along with eIF-2. This is Probable translation initiation factor IF-2 from Methanospirillum hungatei JF-1 (strain ATCC 27890 / DSM 864 / NBRC 100397 / JF-1).